The sequence spans 336 residues: Dihydroorotate dehydrogenase (quinone) (336 aa).

FMN is bound by residues 62-66 (AGLDK) and threonine 86. Position 66 (lysine 66) interacts with substrate. 111–115 (NRMGF) contributes to the substrate binding site. Asparagine 139 and asparagine 172 together coordinate FMN. Asparagine 172 serves as a coordination point for substrate. The Nucleophile role is filled by serine 175. Residue asparagine 177 participates in substrate binding. Lysine 217 and threonine 245 together coordinate FMN. 246-247 (NT) contributes to the substrate binding site. FMN contacts are provided by residues glycine 268, glycine 297, and 318–319 (YT).

It belongs to the dihydroorotate dehydrogenase family. Type 2 subfamily. As to quaternary structure, monomer. Requires FMN as cofactor.

It localises to the cell membrane. It catalyses the reaction (S)-dihydroorotate + a quinone = orotate + a quinol. It functions in the pathway pyrimidine metabolism; UMP biosynthesis via de novo pathway; orotate from (S)-dihydroorotate (quinone route): step 1/1. In terms of biological role, catalyzes the conversion of dihydroorotate to orotate with quinone as electron acceptor. The chain is Dihydroorotate dehydrogenase (quinone) from Pseudoalteromonas translucida (strain TAC 125).